The primary structure comprises 572 residues: Cytosolic Fe-S cluster assembly factor NAR1 (572 aa).

The [4Fe-4S] cluster site is built by cysteine 20, cysteine 62, cysteine 65, cysteine 68, cysteine 205, and cysteine 260. The segment at 416-436 (ARPSRMPGGKPIGSARRPNGK) is disordered. 2 residues coordinate [4Fe-4S] cluster: cysteine 450 and cysteine 454.

It belongs to the NARF family.

In terms of biological role, component of the cytosolic Fe/S protein assembly machinery. Required for maturation of extramitochondrial Fe/S proteins. May play a role in the transfer of pre-assembled Fe/S clusters to target apoproteins. This chain is Cytosolic Fe-S cluster assembly factor NAR1 (NAR1), found in Botryotinia fuckeliana (strain B05.10) (Noble rot fungus).